Reading from the N-terminus, the 219-residue chain is Izumo sperm-egg fusion protein 4 (219 aa).

Residues 1–15 (MALLLCLVGVTAALA) form the signal peptide. The N-linked (GlcNAc...) asparagine glycan is linked to asparagine 206.

It belongs to the Izumo family.

Its subcellular location is the secreted. This chain is Izumo sperm-egg fusion protein 4 (IZUMO4), found in Macaca fascicularis (Crab-eating macaque).